A 1053-amino-acid polypeptide reads, in one-letter code: Prestalk protein (1053 aa).

The signal sequence occupies residues 1–18 (MNKIYLILILFTFVGIIL). The stretch at 38 to 60 (NKCTLDKCNNGCCSNTPININDN) is one X-1 repeat. A 41 X 24 AA tandem repeats, Cys-rich region spans residues 38 to 1019 (NKCTLDKCNN…VHTPVDCNDN (982 aa)). An X-2 repeat occupies 61–84 (DECTVDTCNPKTGISHTPVNCDDG). Residues 85–108 (NSCTADSCLCGKGCQHVPIACDDN) form an X-3 repeat. An A-1 repeat occupies 109-132 (NACTVDSCSNSTGCCHTPLSCDDN). Residues 133–156 (NPCTVDSCSNSTGCCHTPINVDDH) form an A-2 repeat. A B-1 repeat occupies 157–180 (NACTEDKCTQSGGVTHTPIACDDK). An A-3 repeat occupies 181 to 204 (NACTVDSCSNSTGCCHTPLSCDDN). The stretch at 205 to 228 (NACTVDSCSNSTGCVHTPINVDDH) is one A-4 repeat. The stretch at 229–252 (NACTEDKCTQSGGVTHTPIACDDK) is one B-2 repeat. One copy of the A-5 repeat lies at 253 to 276 (NACTADSCSNSTGCCHTPITCDDN). An A-6 repeat occupies 277 to 300 (NACTVDSCSNSTGCCHTPINVDDN). Residues 301-324 (NACTEDKCTQSGGVTHTPIACDDK) form a B-3 repeat. An A-7 repeat occupies 325-348 (NACTVDSCSNSTGCVHTPLACDDK). The A-8 repeat unit spans residues 349–372 (NPCTVDSCSNSTGCCHTPINVDDN). Residues 373–396 (NACTEDKCTQSGGVTHTPINCDDN) form a B-4 repeat. The stretch at 397-420 (NKCTVDSCSNSTGCCHTPMSCDDN) is one A-9 repeat. The stretch at 421–444 (NPCTVDSCSNSTGCVHTPINVDDN) is one A-10 repeat. A B-5 repeat occupies 445 to 468 (NACTEDKCTQNGGVTHTPIACDDK). One copy of the A-11 repeat lies at 469 to 492 (NACTVDSCSNSTGCCHTPLKCDDN). One copy of the A-12 repeat lies at 493–516 (NACTVDSCSNSTGCVHTPINVDDN). The B-6 repeat unit spans residues 517–540 (NACTEDKCTQSGGVTHTPISCDDK). An A-13 repeat occupies 541 to 564 (NPCTIDSCSNSTGCVHTPMSCDDR). The X-4 repeat unit spans residues 565–588 (NPCTSDFCSWEKGCQHVALSCNDF). The A-14 repeat unit spans residues 589–612 (NACTMDSCSNSTGCTHTPIACDDK). One copy of the A-15 repeat lies at 613 to 636 (NACTVDSCSNSTGCVHTPLTCDDN). One copy of the A-16 repeat lies at 637 to 660 (NPCTVDSCSNSTGCCHTPINVDDH). A B-7 repeat occupies 661–684 (NACTEDKCTQSGGVTHTPIACDDK). The A-17 repeat unit spans residues 685–708 (NACTVDSCSNSTGCCHTPLSCDDN). An A-18 repeat occupies 709-732 (NACTVDSCSNSTGCVHTPINVDDN). Residues 733–756 (NACTEDKCTQNGGVTHTPIACDDK) form a B-8 repeat. The stretch at 757–780 (NACTVDSCSNSTGCCHTPLKCDDN) is one A-19 repeat. One copy of the A-20 repeat lies at 781–804 (NPCTVDSCSNSTGCVHTPMNVDDN). The stretch at 805–828 (NACTEDKCTQNGGVTHTPIRCDDL) is one B-9 repeat. The A-21 repeat unit spans residues 829–852 (NSCTADSCSNSTGCVHTPINCDDN). Residues 853–876 (NKCTADSCSNSTGCCHTPISCDDN) form an A-22 repeat. Residues 877–900 (NPCTVDSCSNSTGCCHTPINVDDN) form an A-23 repeat. A B-10 repeat occupies 901 to 924 (NPCTEDKCTQSGGVTHTPIGCNDN). Residues 925–948 (NACTVDSCSNSTGCTHTPMKCDDN) form an A-24 repeat. The A-25 repeat unit spans residues 949–971 (NPCTIDSCSNSTGCVHTPMNCDD). Residues 972-995 (GNFCTLDSCCSTGCTHTPIIIDDN) form an A-26 repeat. An A-27 repeat occupies 996–1019 (NPCTVDSCCNSTGVVHTPVDCNDN).

The protein resides in the secreted. It is found in the extracellular space. The protein localises to the extracellular matrix. In terms of biological role, component of the stalk tube, the matrix that encases stalk cells. The polypeptide is Prestalk protein (ecmB) (Dictyostelium discoideum (Social amoeba)).